A 671-amino-acid polypeptide reads, in one-letter code: Sodium, potassium, lithium and rubidium/H(+) antiporter (671 aa).

The next 11 membrane-spanning stretches (helical) occupy residues 7–29 (VLVL…FIPV), 46–66 (GLHI…PLLF), 83–103 (PILL…GYTI), 110–130 (IPLP…VVAV), 156–176 (ASGL…AFSI), 182–202 (SFVL…FFII), 228–248 (FVIY…VVAG), 276–296 (IILF…IPDV), 315–335 (ILII…LFWA), 364–384 (GAVT…GSPF), and 389–409 (LIIF…SVLL).

Belongs to the monovalent cation:proton antiporter 1 (CPA1) transporter (TC 2.A.36) family. Nhak (TC 2.A.36.3.2) subfamily.

The protein resides in the cell membrane. In terms of biological role, transporter involved in the efflux of sodium, potassium, lithium and rubidium. The sequence is that of Sodium, potassium, lithium and rubidium/H(+) antiporter (nhaK) from Bacillus pumilus (strain SAFR-032).